We begin with the raw amino-acid sequence, 111 residues long: Disintegrin CV-11-alpha (111 aa).

An N-terminal signal peptide occupies residues 1 to 20 (MIQVLLVIICLAVFPYQGSS). Residues 21 to 46 (IILESGNVNDFELVYPKKVTVLPTGA) constitute a propeptide that is removed on maturation. The Disintegrin domain maps to 47 to 111 (MNSAHPCCDP…SDCPRNPWKD (65 aa)). Intrachain disulfides connect Cys-53-Cys-76, Cys-67-Cys-73, Cys-72-Cys-97, and Cys-85-Cys-104. A Cell attachment site motif is present at residues 89–91 (KGD).

The protein belongs to the disintegrin family. Dimeric disintegrin subfamily. As to quaternary structure, heterodimer with subunit beta; disulfide-linked. As to expression, expressed by the venom gland.

It localises to the secreted. Functionally, inhibits ADP-induced human platelet aggregation. Antagonist of alpha-IIb/beta-3 (ITGA2B/ITGB3). This is Disintegrin CV-11-alpha from Cerastes vipera (Sahara sand viper).